The sequence spans 135 residues: Large ribosomal subunit protein uL16c (135 aa).

It belongs to the universal ribosomal protein uL16 family. As to quaternary structure, part of the 50S ribosomal subunit.

It localises to the plastid. It is found in the chloroplast. The polypeptide is Large ribosomal subunit protein uL16c (Olimarabidopsis pumila (Dwarf rocket)).